A 114-amino-acid chain; its full sequence is UPF0102 protein HP_0823 (114 aa).

The protein belongs to the UPF0102 family.

The protein is UPF0102 protein HP_0823 of Helicobacter pylori (strain ATCC 700392 / 26695) (Campylobacter pylori).